Here is a 915-residue protein sequence, read N- to C-terminus: Copper-exporting P-type ATPase (915 aa).

HMA domains are found at residues 11 to 72 and 73 to 134; these read NHFA…YQGG and TEQT…YQAI. The Cu(+) site is built by cysteine 22, cysteine 25, cysteine 84, and cysteine 87. The tract at residues 142-169 is disordered; sequence FAPAASIDEKETDTPDAENSSNTEATEA. Over residues 158–169 the composition is skewed to polar residues; the sequence is AENSSNTEATEA. The 65-residue stretch at 172 to 236 folds into the HMA 3 domain; sequence QTLSLLIKGM…AIQSSGYQAE (65 aa). The Cu(+) site is built by cysteine 183 and cysteine 186. 7 consecutive transmembrane segments (helical) span residues 265 to 285, 293 to 313, 329 to 349, 359 to 379, 474 to 494, 514 to 534, and 541 to 561; these read LGIA…NMMI, VWGG…RHFF, TLVA…VAWP, VYFE…YIET, LVIT…IQMV, VFVP…YLYG, and YMLV…LGLA. Aspartate 598 functions as the 4-aspartylphosphate intermediate in the catalytic mechanism. Positions 796 and 800 each coordinate Mg(2+). 2 helical membrane passes run 801–821 and 865–885; these read APAL…DVAI and IPIA…PVVA.

Belongs to the cation transport ATPase (P-type) (TC 3.A.3) family. Type IB subfamily.

It localises to the cell membrane. It catalyses the reaction Cu(+)(in) + ATP + H2O = Cu(+)(out) + ADP + phosphate + H(+). Its function is as follows. Involved in copper export. The chain is Copper-exporting P-type ATPase (copA) from Vibrio cholerae serotype O1 (strain ATCC 39315 / El Tor Inaba N16961).